We begin with the raw amino-acid sequence, 309 residues long: ADP-L-glycero-D-manno-heptose-6-epimerase (309 aa).

NADP(+) is bound by residues 10 to 11 (FI), 31 to 32 (DN), K38, K53, 75 to 79 (LGACS), and N92. Y140 acts as the Proton acceptor in catalysis. NADP(+) is bound at residue K144. N169 provides a ligand contact to substrate. Positions 170 and 178 each coordinate NADP(+). K178 serves as the catalytic Proton acceptor. Substrate contacts are provided by residues S180, H187, 201-204 (FLGS), R209, and Y272.

Belongs to the NAD(P)-dependent epimerase/dehydratase family. HldD subfamily. In terms of assembly, homopentamer. Requires NADP(+) as cofactor.

The catalysed reaction is ADP-D-glycero-beta-D-manno-heptose = ADP-L-glycero-beta-D-manno-heptose. Its pathway is nucleotide-sugar biosynthesis; ADP-L-glycero-beta-D-manno-heptose biosynthesis; ADP-L-glycero-beta-D-manno-heptose from D-glycero-beta-D-manno-heptose 7-phosphate: step 4/4. Functionally, catalyzes the interconversion between ADP-D-glycero-beta-D-manno-heptose and ADP-L-glycero-beta-D-manno-heptose via an epimerization at carbon 6 of the heptose. The chain is ADP-L-glycero-D-manno-heptose-6-epimerase from Hamiltonella defensa subsp. Acyrthosiphon pisum (strain 5AT).